Here is a 308-residue protein sequence, read N- to C-terminus: Taste receptor type 2 member 46 (308 aa).

Residue M1 is a topological domain, extracellular. A helical membrane pass occupies residues 2 to 22; that stretch reads ITFLSITFSILVGVIFVIGNF. Residues 23-46 lie on the Cytoplasmic side of the membrane; sequence ANGFIALVNSIEWVKRQKISFADQ. A helical transmembrane segment spans residues 47 to 67; the sequence is ILTGLAVSRVGLLWVLLLHLY. Over 68–86 the chain is Extracellular; it reads ATEFNLAFYSVEVRITAYN. The helical transmembrane segment at 87–107 threads the bilayer; sequence VWIVTNHFSNWLSTSLSMFYL. At 108-126 the chain is on the cytoplasmic side; the sequence is LKIATFSNLIFLHLKRKVK. Residues 127-147 form a helical membrane-spanning segment; it reads SVILVTLLGPLLFLVCHLFVM. Residues 148–178 lie on the Extracellular side of the membrane; the sequence is NMNHIVWRKEYEGNITWRIKLRSAMYLSNVT. N-linked (GlcNAc...) asparagine glycans are attached at residues N161 and N176. A helical membrane pass occupies residues 179 to 199; sequence VTMLANLIPLTLTLMSFLLLI. Topologically, residues 200–229 are cytoplasmic; it reads CSLCKHLKKMQVHGKGSQDPSTKVHIKALQ. A helical transmembrane segment spans residues 230-250; sequence TVTSFLLLCAIYFLSMILSVW. Topologically, residues 251–258 are extracellular; that stretch reads NFELEKKP. The helical transmembrane segment at 259–279 threads the bilayer; that stretch reads VFMFCQAVIFSYPSTHPLILI. The Cytoplasmic segment spans residues 280–308; sequence WGNKKLKQIFLSVLWNVRYWVKGQKPSSP.

Belongs to the G-protein coupled receptor T2R family.

Its subcellular location is the membrane. It is found in the cell projection. The protein resides in the cilium membrane. Receptor that may play a role in the perception of bitterness and is gustducin-linked. May play a role in sensing the chemical composition of the gastrointestinal content. The activity of this receptor may stimulate alpha gustducin, mediate PLC-beta-2 activation and lead to the gating of TRPM5. In airway epithelial cells, binding of bitter compounds increases the intracellular calcium ion concentration and stimulates ciliary beat frequency. This chain is Taste receptor type 2 member 46 (TAS2R46), found in Macaca mulatta (Rhesus macaque).